The chain runs to 291 residues: Pre-mRNA-splicing factor SPP381 (291 aa).

Disordered stretches follow at residues 1 to 99 (MSFR…PLPR) and 239 to 266 (EKEK…YKIT). 2 stretches are compositionally biased toward polar residues: residues 28–41 (QNVS…SLSH) and 52–62 (TGKNRTPNDGQ). Over residues 63–91 (ESNESDGSPESDESPESEESSDNSDSSDS) the composition is skewed to acidic residues. A compositionally biased stretch (basic and acidic residues) spans 239-258 (EKEKLDHKKQRSAEKVEKSH).

Belongs to the SPP381 family. Component of the U4/U6-U5 tri-snRNP complex composed of the U4, U6 and U5 snRNAs and at least PRP3, PRP4, PRP6, PRP8, PRP18, PRP31, PRP38, SNU13, SNU23, SNU66, SNU114, SPP381, SMB1, SMD1, SMD2, SMD3, SMX2, SMX3, LSM2, LSM3, LSM4, LSM5, LSM6, LSM7, LSM8, BRR2 and DIB1. Interacts with PRP38.

Its subcellular location is the nucleus. Its function is as follows. Component of the spliceosome and rRNA processing machinery. In association with the spliceosomal U4/U6.U5 tri-snRNP particle, required for splicing of pre-mRNA. This chain is Pre-mRNA-splicing factor SPP381 (SPP381), found in Saccharomyces cerevisiae (strain ATCC 204508 / S288c) (Baker's yeast).